We begin with the raw amino-acid sequence, 432 residues long: Gamma-glutamyl phosphate reductase (432 aa).

Belongs to the gamma-glutamyl phosphate reductase family.

Its subcellular location is the cytoplasm. The enzyme catalyses L-glutamate 5-semialdehyde + phosphate + NADP(+) = L-glutamyl 5-phosphate + NADPH + H(+). It participates in amino-acid biosynthesis; L-proline biosynthesis; L-glutamate 5-semialdehyde from L-glutamate: step 2/2. Functionally, catalyzes the NADPH-dependent reduction of L-glutamate 5-phosphate into L-glutamate 5-semialdehyde and phosphate. The product spontaneously undergoes cyclization to form 1-pyrroline-5-carboxylate. This Methylorubrum extorquens (strain PA1) (Methylobacterium extorquens) protein is Gamma-glutamyl phosphate reductase.